Here is a 266-residue protein sequence, read N- to C-terminus: Adaptin ear-binding coat-associated protein 2 (266 aa).

Disordered regions lie at residues 165-198 (MRKK…KSST) and 245-266 (DFTK…WVQF). The residue at position 181 (S181) is a Phosphoserine. 2 short sequence motifs (WXXF motif) span residues 243–246 (WGDF) and 263–266 (WVQF). The span at 249–266 (STGSPSSQSQPGTGWVQF) shows a compositional bias: low complexity.

It belongs to the NECAP family. As to quaternary structure, interacts with AP1G1 and AP2A1 components of the adapter protein complexes AP-1 and AP-2. Interacts with the GAE domain proteins GGA1, GGA2 and GGA3. As to expression, expressed in brain, heart, kidney, liver, lung, skeletal muscles and testis (at protein level).

The protein localises to the cytoplasmic vesicle. Its subcellular location is the clathrin-coated vesicle membrane. It localises to the cell membrane. Its function is as follows. Involved in endocytosis. The protein is Adaptin ear-binding coat-associated protein 2 (Necap2) of Mus musculus (Mouse).